We begin with the raw amino-acid sequence, 498 residues long: Hyaluronan-mediated motility receptor (498 aa).

The interval 150–331 is required for interaction with FAM83D; that stretch reads EEMTSERNVF…ITDLQNQLRQ (182 aa). N-linked (GlcNAc...) asparagine glycosylation is found at Asn-262 and Asn-302. 2 hyaluronic acid-binding regions span residues 420-430 and 442-451; these read KQKIKHVVKLK and KLRSQLAKRK. Residue Asn-483 is glycosylated (N-linked (GlcNAc...) asparagine). Thr-488 carries the phosphothreonine modification.

Interacts with ANKRD26. Interacts with DYNLL1. Interacts with FAM83D/CHICA.

The protein localises to the cell surface. It localises to the cytoplasm. It is found in the cytoskeleton. Its subcellular location is the spindle. Functionally, receptor for hyaluronic acid (HA). Involved in cell motility. When hyaluronan binds to HMMR, the phosphorylation of a number of proteins, including the PTK2/FAK1 occurs. May also be involved in cellular transformation and metastasis formation, and in regulating extracellular-regulated kinase (ERK) activity. May act as a regulator of adipogenisis. This is Hyaluronan-mediated motility receptor (Hmmr) from Rattus norvegicus (Rat).